Reading from the N-terminus, the 215-residue chain is Cytochrome b6 (215 aa).

A helical membrane pass occupies residues 32–52 (IFYCLGGITFTSFLVQVATGF). Residue Cys35 coordinates heme c. Heme b-binding residues include His86 and His100. Transmembrane regions (helical) follow at residues 90 to 110 (ASMMVMMMILHVFRVYLTGGF), 116 to 136 (LTWVTGVIMAVCTVSFGVTGY), and 186 to 206 (LHTFVLPLATAVFMLAHFLMI). The heme b site is built by His187 and His202.

It belongs to the cytochrome b family. PetB subfamily. The 4 large subunits of the cytochrome b6-f complex are cytochrome b6, subunit IV (17 kDa polypeptide, PetD), cytochrome f and the Rieske protein, while the 4 small subunits are PetG, PetL, PetM and PetN. The complex functions as a dimer. Heme b serves as cofactor. It depends on heme c as a cofactor.

It is found in the plastid. Its subcellular location is the chloroplast thylakoid membrane. Its function is as follows. Component of the cytochrome b6-f complex, which mediates electron transfer between photosystem II (PSII) and photosystem I (PSI), cyclic electron flow around PSI, and state transitions. The sequence is that of Cytochrome b6 from Oltmannsiellopsis viridis (Marine flagellate).